A 104-amino-acid chain; its full sequence is Large ribosomal subunit protein uL24 (104 aa).

This sequence belongs to the universal ribosomal protein uL24 family. Part of the 50S ribosomal subunit.

Its function is as follows. One of two assembly initiator proteins, it binds directly to the 5'-end of the 23S rRNA, where it nucleates assembly of the 50S subunit. Functionally, one of the proteins that surrounds the polypeptide exit tunnel on the outside of the subunit. This chain is Large ribosomal subunit protein uL24, found in Caulobacter vibrioides (strain ATCC 19089 / CIP 103742 / CB 15) (Caulobacter crescentus).